A 239-amino-acid chain; its full sequence is 1-(5-phosphoribosyl)-5-[(5-phosphoribosylamino)methylideneamino] imidazole-4-carboxamide isomerase (239 aa).

Asp8 acts as the Proton acceptor in catalysis. Asp129 (proton donor) is an active-site residue.

This sequence belongs to the HisA/HisF family.

Its subcellular location is the cytoplasm. The enzyme catalyses 1-(5-phospho-beta-D-ribosyl)-5-[(5-phospho-beta-D-ribosylamino)methylideneamino]imidazole-4-carboxamide = 5-[(5-phospho-1-deoxy-D-ribulos-1-ylimino)methylamino]-1-(5-phospho-beta-D-ribosyl)imidazole-4-carboxamide. The protein operates within amino-acid biosynthesis; L-histidine biosynthesis; L-histidine from 5-phospho-alpha-D-ribose 1-diphosphate: step 4/9. This chain is 1-(5-phosphoribosyl)-5-[(5-phosphoribosylamino)methylideneamino] imidazole-4-carboxamide isomerase, found in Bacillus cereus (strain Q1).